A 65-amino-acid polypeptide reads, in one-letter code: Large ribosomal subunit protein bL35 (65 aa).

It belongs to the bacterial ribosomal protein bL35 family.

This Phytoplasma mali (strain AT) protein is Large ribosomal subunit protein bL35.